Here is a 198-residue protein sequence, read N- to C-terminus: Chromophore lyase CpcT/CpeT 3 (198 aa).

It belongs to the CpcT/CpeT biliprotein lyase family.

Its function is as follows. Covalently attaches a chromophore to Cys residue(s) of phycobiliproteins. The chain is Chromophore lyase CpcT/CpeT 3 from Synechococcus sp. (strain JA-3-3Ab) (Cyanobacteria bacterium Yellowstone A-Prime).